The following is a 101-amino-acid chain: MKTKLKIGDSVKILSGKDKGRIGKIASINRKKNKVIVESCNMVKKVIKARTPQEKGKIIDKEAAIDISNVMIFVKGTSSRLGIRFENNEKIRYLKKNGQRI.

The protein belongs to the universal ribosomal protein uL24 family. Part of the 50S ribosomal subunit.

Its function is as follows. One of two assembly initiator proteins, it binds directly to the 5'-end of the 23S rRNA, where it nucleates assembly of the 50S subunit. Functionally, one of the proteins that surrounds the polypeptide exit tunnel on the outside of the subunit. The polypeptide is Large ribosomal subunit protein uL24 (Borreliella afzelii (strain PKo) (Borrelia afzelii)).